The chain runs to 221 residues: MQTPSLELKGSSFTLSVLHINSNDMAVIAAELDAKLAIAPQFFLGAPLVVNLSAIQATDFDILGLKEILTNRQLIIVGITSACPELTKQAKSIGLATVKTGKEATSQPQMPKTTKIVKQNVRSGQQIYAKNADLIIVGAVGNGAEVIADGSIHIYGTLRGKAMAGAGGDRHAVIMAQKIEAELVSIAGQYWLTENLQQNGAALSGCIRLEGESLTVESLPL.

The protein belongs to the MinC family. Interacts with MinD and FtsZ.

In terms of biological role, cell division inhibitor that blocks the formation of polar Z ring septums. Rapidly oscillates between the poles of the cell to destabilize FtsZ filaments that have formed before they mature into polar Z rings. Prevents FtsZ polymerization. This is Probable septum site-determining protein MinC from Shewanella halifaxensis (strain HAW-EB4).